Here is a 447-residue protein sequence, read N- to C-terminus: MREIISIHIGQAGIQVGNACWELYCLEHGIQQDGTMPSDTTVGVAHDAFNTFFSETGAGKHVPRAIFVDLEPTVIDEVRTGAYRQLFHPEQLISGKEDAANNFARGHYTVGKEIVDLCLGRVRQLADNCTGLQGFLVFNAVGGGTGSGLGSLLLERLSVDYGKKSKLGFTIYPSPQVSTAVVEPYNSVLSTHSLLEHTDVAVLLDNEAIYDICRRSLDIERPTYTNLNRLISQIISSLTTSLRFDGAINVDVTEFQTNLVPYPRIHFMLSSYAPVISAEKAYHEQLSVPEITNAVFEPSSMMAKCDPRHGKYMACCLMYRGDVVPKDVNAAVVTIKTKRTVQFVDXCPTGFKCGINYQPPSVVPGGDLAKVQRAVCMISNNTAVAEVFSRIDHKFDLMYAKRAFVHWYVGEGMEEGEFSEAREDLAXLEKXYEEVGAEGADDEVTRG.

The GTP site is built by Gln11, Glu71, Gly144, Thr145, Thr179, Asn206, and Asn228. Residue Glu71 participates in Mg(2+) binding. The active site involves Glu254.

This sequence belongs to the tubulin family. As to quaternary structure, dimer of alpha and beta chains. A typical microtubule is a hollow water-filled tube with an outer diameter of 25 nm and an inner diameter of 15 nM. Alpha-beta heterodimers associate head-to-tail to form protofilaments running lengthwise along the microtubule wall with the beta-tubulin subunit facing the microtubule plus end conferring a structural polarity. Microtubules usually have 13 protofilaments but different protofilament numbers can be found in some organisms and specialized cells. Mg(2+) serves as cofactor.

The protein localises to the cytoplasm. It localises to the cytoskeleton. It carries out the reaction GTP + H2O = GDP + phosphate + H(+). In terms of biological role, tubulin is the major constituent of microtubules, a cylinder consisting of laterally associated linear protofilaments composed of alpha- and beta-tubulin heterodimers. Microtubules grow by the addition of GTP-tubulin dimers to the microtubule end, where a stabilizing cap forms. Below the cap, tubulin dimers are in GDP-bound state, owing to GTPase activity of alpha-tubulin. The polypeptide is Tubulin alpha chain (TUBA) (Avena sativa (Oat)).